Consider the following 209-residue polypeptide: Chaperone protein TorD (209 aa).

It belongs to the TorD/DmsD family. TorD subfamily.

It localises to the cytoplasm. Involved in the biogenesis of TorA. Acts on TorA before the insertion of the molybdenum cofactor and, as a result, probably favors a conformation of the apoenzyme that is competent for acquiring the cofactor. This is Chaperone protein TorD from Shewanella sp. (strain ANA-3).